The chain runs to 1396 residues: DNA-directed RNA polymerase subunit beta' (1396 aa).

4 residues coordinate Zn(2+): Cys70, Cys72, Cys85, and Cys88. Positions 460, 462, and 464 each coordinate Mg(2+). Residues Cys814, Cys888, Cys895, and Cys898 each contribute to the Zn(2+) site.

The protein belongs to the RNA polymerase beta' chain family. The RNAP catalytic core consists of 2 alpha, 1 beta, 1 beta' and 1 omega subunit. When a sigma factor is associated with the core the holoenzyme is formed, which can initiate transcription. Mg(2+) is required as a cofactor. Requires Zn(2+) as cofactor.

The catalysed reaction is RNA(n) + a ribonucleoside 5'-triphosphate = RNA(n+1) + diphosphate. DNA-dependent RNA polymerase catalyzes the transcription of DNA into RNA using the four ribonucleoside triphosphates as substrates. In Chromobacterium violaceum (strain ATCC 12472 / DSM 30191 / JCM 1249 / CCUG 213 / NBRC 12614 / NCIMB 9131 / NCTC 9757 / MK), this protein is DNA-directed RNA polymerase subunit beta'.